Here is a 151-residue protein sequence, read N- to C-terminus: ATP synthase subunit b' (151 aa).

The chain crosses the membrane as a helical span at residues 18–38; it reads TLPLMALQVVLLTFILNALFF.

Belongs to the ATPase B chain family. In terms of assembly, F-type ATPases have 2 components, F(1) - the catalytic core - and F(0) - the membrane proton channel. F(1) has five subunits: alpha(3), beta(3), gamma(1), delta(1), epsilon(1). F(0) has four main subunits: a(1), b(1), b'(1) and c(10-14). The alpha and beta chains form an alternating ring which encloses part of the gamma chain. F(1) is attached to F(0) by a central stalk formed by the gamma and epsilon chains, while a peripheral stalk is formed by the delta, b and b' chains.

The protein resides in the cellular thylakoid membrane. F(1)F(0) ATP synthase produces ATP from ADP in the presence of a proton or sodium gradient. F-type ATPases consist of two structural domains, F(1) containing the extramembraneous catalytic core and F(0) containing the membrane proton channel, linked together by a central stalk and a peripheral stalk. During catalysis, ATP synthesis in the catalytic domain of F(1) is coupled via a rotary mechanism of the central stalk subunits to proton translocation. In terms of biological role, component of the F(0) channel, it forms part of the peripheral stalk, linking F(1) to F(0). The b'-subunit is a diverged and duplicated form of b found in plants and photosynthetic bacteria. This Prochlorococcus marinus (strain MIT 9303) protein is ATP synthase subunit b'.